The following is a 155-amino-acid chain: MLPFKLWVDADALPRILREVILRASDRYQLEVTFVANQNVGITPSVRIKSIQVMSGADRADQEIVDRMQANDIVITQDIPLAAQVIEKGGIAIHPRGEVYTTANVKARLHLRDFMDTLRGAGVQTGGPPPISERDKREFSSALDQTILKQKRKTA.

The interval 120-155 (GAGVQTGGPPPISERDKREFSSALDQTILKQKRKTA) is disordered.

It belongs to the UPF0178 family.

This chain is UPF0178 protein ACIAD2644, found in Acinetobacter baylyi (strain ATCC 33305 / BD413 / ADP1).